The following is a 212-amino-acid chain: ATP phosphoribosyltransferase (212 aa).

The protein belongs to the ATP phosphoribosyltransferase family. Short subfamily. As to quaternary structure, heteromultimer composed of HisG and HisZ subunits.

The protein localises to the cytoplasm. The enzyme catalyses 1-(5-phospho-beta-D-ribosyl)-ATP + diphosphate = 5-phospho-alpha-D-ribose 1-diphosphate + ATP. It functions in the pathway amino-acid biosynthesis; L-histidine biosynthesis; L-histidine from 5-phospho-alpha-D-ribose 1-diphosphate: step 1/9. Catalyzes the condensation of ATP and 5-phosphoribose 1-diphosphate to form N'-(5'-phosphoribosyl)-ATP (PR-ATP). Has a crucial role in the pathway because the rate of histidine biosynthesis seems to be controlled primarily by regulation of HisG enzymatic activity. The protein is ATP phosphoribosyltransferase of Clostridium novyi (strain NT).